A 1089-amino-acid polypeptide reads, in one-letter code: Probable transport protein MmpL8 (1089 aa).

The tract at residues 1-26 is disordered; that stretch reads MCDVLMQPVRTPRPSTNLRSKPLRPT. 12 consecutive transmembrane segments (helical) span residues 44 to 64, 222 to 242, 257 to 277, 316 to 336, 349 to 369, 400 to 420, 555 to 575, 874 to 894, 898 to 918, 930 to 950, 973 to 993, and 996 to 1016; these read WVVI…VPSL, ITIL…TMVL, LVAI…IFMS, IGKV…GMVF, LGIS…ALMV, KTHL…AGLA, AIST…LLGG, IIAM…RAIV, YLIG…VIVF, IPGL…MLLI, GGVI…LVFA, and GSVV…TFLV. The interval 1056-1078 is disordered; that stretch reads RTKRKPLLPKEEEEQSPPDDDDL. The span at 1066-1078 shows a compositional bias: acidic residues; sequence EEEEQSPPDDDDL.

Belongs to the resistance-nodulation-cell division (RND) (TC 2.A.6) family. MmpL subfamily.

Its subcellular location is the cell membrane. The chain is Probable transport protein MmpL8 (mmpL8) from Mycobacterium tuberculosis (strain ATCC 25177 / H37Ra).